We begin with the raw amino-acid sequence, 632 residues long: MISPLLQHISSPQKLRSLSLDQLPLLCDEIRNRIIATLSLTGGHLASNLGIVELTVALHYVFASPEDQFIFDVGHQAYVHKLLTGRNTEAFSNIRHDNGLSGFTSPQESNHDIFFSGHAGNALSLALGLAKGASHGSSHILPILGDAAFSCGLTLEALNNVPSDLSKFIIVLNDNQMSISENVGNIPQGISQWIQPPKFDKIFQKIHSWMRKIPGFSRQKSELLHKVDIALKSLSHPLFEQFGIHYVGPFDGHNIKKLIPALEAVKGLPYPVLFHVCTAKGNGLAEAEKDPALYHGVKAYFKNHSPKKKPLSSEVKTPSSFPQHVGHILCQLGEKHPRLQVVTPAMSLGSCLEDFRKQFPDRFTDVGIAEGHAVTFSAGIARSGTPVVCSIYSTFLNRAMDNVFHDVCMQELPVIFAIDRAGLAFHDGRSHHGIYDLGFLCSMPNMVVCQPRNASVLERLLFSSLLWKSPCAIRYPNLSTRKEVSNPSFSPIFPGEAEVLCQGDDLLLIALGHMCDTALAVKEQLLDHGISTTVVDPIFIKPLDTELLQTLLSHHSKVVVLEEHSIHGGLSAEFLLFLNNHNLKTDVLSLGIPDIFIPHGNPETILNMIGLTSDQITLKILAHFNFSAPIPI.

Thiamine diphosphate contacts are provided by residues histidine 75 and 117–119 (GHA). A Mg(2+)-binding site is contributed by aspartate 146. Residues 147-148 (AA), asparagine 175, and glutamate 370 contribute to the thiamine diphosphate site. Asparagine 175 contributes to the Mg(2+) binding site.

This sequence belongs to the transketolase family. DXPS subfamily. As to quaternary structure, homodimer. The cofactor is Mg(2+). Requires thiamine diphosphate as cofactor.

It catalyses the reaction D-glyceraldehyde 3-phosphate + pyruvate + H(+) = 1-deoxy-D-xylulose 5-phosphate + CO2. Its pathway is metabolic intermediate biosynthesis; 1-deoxy-D-xylulose 5-phosphate biosynthesis; 1-deoxy-D-xylulose 5-phosphate from D-glyceraldehyde 3-phosphate and pyruvate: step 1/1. Catalyzes the acyloin condensation reaction between C atoms 2 and 3 of pyruvate and glyceraldehyde 3-phosphate to yield 1-deoxy-D-xylulose-5-phosphate (DXP). This Chlamydia muridarum (strain MoPn / Nigg) protein is 1-deoxy-D-xylulose-5-phosphate synthase.